The sequence spans 819 residues: MSNIQNMSLEDIMGERFGRYSKYIIQERALPDIRDGLKPVQRRILYSMNKDGNTFEKGYRKSAKSVGNIMGNFHPHGDASIYDAMVRMSQDWKNREILVEMHGNNGSMDGDPPAAMRYTEARLSEIAGYLLQDIEKNTVSFAWNFDDTEKEPTVLPAAFPNLLVNGSSGISAGYATDIPPHNLSEVIDAVVYMIDHPKASLEKLMEFLPGPDFPTGGIIQGADEIKKAYETGKGRVVVRSRTEIEELKGGKQQIIVTEIPYEVNKAVLVKKIDDVRVNNKVPGIVEVRDESDRTGLRIAIELKKEADSQTILNYLLKYTDLQVNYNFNMVAIDHFTPRQVGLQKILSSYISHRKDIIIERSKFDKAKAEKRLHIVEGLIRVLSILDEIIALIRSSDNKADAKENLKVSYDFSEEQAEAIVTLQLYRLTNTDIVTLQNEENDLRDLITTLSAIIGDEATMYNVMKRELREVKKKFANPRLSELQAESQIIEIDTASLIAEEETFVSVTRGGYLKRTSPRSFNASSLEEVGKRDDDELIFVKQAKTTEHLLLFTTLGNVIYRPIHELTDLRWKDIGEHLSQTISNFATEEEILYADIVTSFDQGLYVAVTQNGFIKRFDRKELSPWRTYKSKSTKYVKLKDDKDRVVTLSPVIMEDLLLVTKNGYALRFSSQEVPIQGLKSAGVKGINLKNDDSLASAFAVTSNSFFVLTQRGSLKRMAVDDIPQTSRANRGLLVLRELKTKPHRVFLAGGVQSDASAEQFDLFTDIPEEETNQQMLEVISKTGQTYEIALETLSLSERTSNGSFISDTISDQEVLVARTR.

A Topo IIA-type catalytic domain is found at 30–496 (LPDIRDGLKP…QIIEIDTASL (467 aa)). Tyr-118 (O-(5'-phospho-DNA)-tyrosine intermediate) is an active-site residue.

It belongs to the type II topoisomerase GyrA/ParC subunit family. ParC type 2 subfamily. As to quaternary structure, heterotetramer composed of ParC and ParE.

It localises to the cell membrane. It catalyses the reaction ATP-dependent breakage, passage and rejoining of double-stranded DNA.. Topoisomerase IV is essential for chromosome segregation. It relaxes supercoiled DNA. Performs the decatenation events required during the replication of a circular DNA molecule. This Streptococcus pyogenes serotype M6 (strain ATCC BAA-946 / MGAS10394) protein is DNA topoisomerase 4 subunit A.